The primary structure comprises 368 residues: MSILEQVQPIETMLPERYYTMSTEDMEKRVREIKEKMGKMLFIPGHHYQKDEVVQFSDAAGDSLQLAQVAASNKDAKYIVFCGVHFMAETADMLTTDDQVVILPDMRAGCSMADMADIEQTERAWKELTKLFGDTMIPLTYVNSTAAIKAFCGRNGGATVTSSNAKQMVSWAFTQKERLVFLPDQHLGRNTAYDLGIPLDKMAVWDPHTDSLEYDGDIEEIQVILWKGHCSVHQNFTVKNIESIRKNHPDMNIIVHPECCYEVVAASDYAGSTKYIIDMIESAPSGSKWAIGTEMNLVNRIIQQHPDKEIVSLNPFMCPCLTMNRIDLPHLLWALETIERGEEINVISVDKQVTTEAVFALNRMLERV.

Iminosuccinate is bound by residues histidine 46 and serine 63. Cysteine 110 serves as a coordination point for [4Fe-4S] cluster. Iminosuccinate-binding positions include tyrosine 141–asparagine 143 and serine 162. Position 230 (cysteine 230) interacts with [4Fe-4S] cluster. Iminosuccinate-binding positions include histidine 256 to glutamate 258 and threonine 273. Residue cysteine 320 participates in [4Fe-4S] cluster binding.

Belongs to the quinolinate synthase family. Type 3 subfamily. [4Fe-4S] cluster serves as cofactor.

The protein resides in the cytoplasm. The enzyme catalyses iminosuccinate + dihydroxyacetone phosphate = quinolinate + phosphate + 2 H2O + H(+). It functions in the pathway cofactor biosynthesis; NAD(+) biosynthesis; quinolinate from iminoaspartate: step 1/1. In terms of biological role, catalyzes the condensation of iminoaspartate with dihydroxyacetone phosphate to form quinolinate. In Bacillus cereus (strain B4264), this protein is Quinolinate synthase.